The primary structure comprises 264 residues: Thymidylate synthase (264 aa).

Arginine 21 lines the dUMP pocket. Residue histidine 51 participates in (6R)-5,10-methylene-5,6,7,8-tetrahydrofolate binding. 126–127 (RR) is a binding site for dUMP. The active-site Nucleophile is cysteine 146. DUMP contacts are provided by residues 166–169 (RSAD), asparagine 177, and 207–209 (HLY). A (6R)-5,10-methylene-5,6,7,8-tetrahydrofolate-binding site is contributed by aspartate 169. Alanine 263 contacts (6R)-5,10-methylene-5,6,7,8-tetrahydrofolate.

The protein belongs to the thymidylate synthase family. Bacterial-type ThyA subfamily. Homodimer.

It is found in the cytoplasm. It carries out the reaction dUMP + (6R)-5,10-methylene-5,6,7,8-tetrahydrofolate = 7,8-dihydrofolate + dTMP. It functions in the pathway pyrimidine metabolism; dTTP biosynthesis. In terms of biological role, catalyzes the reductive methylation of 2'-deoxyuridine-5'-monophosphate (dUMP) to 2'-deoxythymidine-5'-monophosphate (dTMP) while utilizing 5,10-methylenetetrahydrofolate (mTHF) as the methyl donor and reductant in the reaction, yielding dihydrofolate (DHF) as a by-product. This enzymatic reaction provides an intracellular de novo source of dTMP, an essential precursor for DNA biosynthesis. This chain is Thymidylate synthase, found in Rhizobium etli (strain ATCC 51251 / DSM 11541 / JCM 21823 / NBRC 15573 / CFN 42).